A 363-amino-acid polypeptide reads, in one-letter code: MKVTLSVLKADIGSVGGHTLPSRKVLAKVEEVVREEVGRLLLDAYVFHIGDDIVLLLSHTRGVRNQEVHALAWKAFREGTEVARAEGLYGAGQDLLKDAFTGNLHGLGPQVAEMEFTERPAEPFMVLAADKTEPGAFNLPLYLAFADPMYSSGLLLSPELRPGFRFRIMDLAQTERDSYIELDAPERLYDIATLLRDSHRFAIESIWSRKHGEQAAVVSTTRLRNIAGRYVGKDDPVAIVRTQKIFPATEEFGPVFALAPYVAGDTRGSHHMPLMPVRANTPASTFFCVPMVCGLAFSLREGRLSEPVDLFADPVWEAVRAKVVEKAQEMRRQGFYGPAMLPMEELEYTGIAERLKALEREFS.

The Proton acceptor; for FBP phosphatase activity role is filled by Asp11. The Mg(2+) site is built by Asp11, His18, Asp51, and Asp52. His18 serves as a coordination point for beta-D-fructose 1,6-bisphosphate. Dihydroxyacetone phosphate is bound at residue His18. Tyr89 contacts beta-D-fructose 1,6-bisphosphate. Gln93 lines the Mg(2+) pocket. 102–103 contacts beta-D-fructose 1,6-bisphosphate; sequence GN. Mg(2+) is bound at residue Asp130. Position 131 (Lys131) interacts with beta-D-fructose 1,6-bisphosphate. Lys131 is a dihydroxyacetone phosphate binding site. Catalysis depends on Tyr230, which acts as the Proton donor/acceptor; for FBP aldolase activity. Residues Lys233, Asp234, and Asp235 each contribute to the Mg(2+) site. Lys233 acts as the Schiff-base intermediate with DHAP; for FBP aldolase activity in catalysis. Residues 243 to 244, Arg267, and Tyr348 each bind beta-D-fructose 1,6-bisphosphate; that span reads QK. Residue Arg267 coordinates dihydroxyacetone phosphate.

The protein belongs to the FBP aldolase/phosphatase family. In terms of assembly, homooctamer; dimer of tetramers. It depends on Mg(2+) as a cofactor.

The enzyme catalyses beta-D-fructose 1,6-bisphosphate + H2O = beta-D-fructose 6-phosphate + phosphate. It catalyses the reaction beta-D-fructose 1,6-bisphosphate = D-glyceraldehyde 3-phosphate + dihydroxyacetone phosphate. It functions in the pathway carbohydrate biosynthesis; gluconeogenesis. In terms of biological role, catalyzes two subsequent steps in gluconeogenesis: the aldol condensation of dihydroxyacetone phosphate (DHAP) and glyceraldehyde-3-phosphate (GA3P) to fructose-1,6-bisphosphate (FBP), and the dephosphorylation of FBP to fructose-6-phosphate (F6P). This Thermus thermophilus (strain ATCC BAA-163 / DSM 7039 / HB27) protein is Fructose-1,6-bisphosphate aldolase/phosphatase.